We begin with the raw amino-acid sequence, 106 residues long: Small ribosomal subunit protein uS10 (106 aa).

The protein belongs to the universal ribosomal protein uS10 family. In terms of assembly, part of the 30S ribosomal subunit.

Its function is as follows. Involved in the binding of tRNA to the ribosomes. In Pyrobaculum neutrophilum (strain DSM 2338 / JCM 9278 / NBRC 100436 / V24Sta) (Thermoproteus neutrophilus), this protein is Small ribosomal subunit protein uS10.